The chain runs to 338 residues: Probable tRNA pseudouridine synthase B (338 aa).

Aspartate 82 serves as the catalytic Nucleophile. Positions 250 to 325 (LPKVWIRDSA…IAVDVDKVFM (76 aa)) constitute a PUA domain.

This sequence belongs to the pseudouridine synthase TruB family. Type 2 subfamily.

The catalysed reaction is uridine(55) in tRNA = pseudouridine(55) in tRNA. In terms of biological role, could be responsible for synthesis of pseudouridine from uracil-55 in the psi GC loop of transfer RNAs. This Thermococcus kodakarensis (strain ATCC BAA-918 / JCM 12380 / KOD1) (Pyrococcus kodakaraensis (strain KOD1)) protein is Probable tRNA pseudouridine synthase B.